Consider the following 522-residue polypeptide: Biotin-dependent long chain acyl-coenzyme A carboxylase beta4 subunit (522 aa).

The CoA carboxyltransferase N-terminal domain occupies 11-261; that stretch reads TAEKLAELRE…NCFDKPPVVN (251 aa). The CoA carboxyltransferase C-terminal domain occupies 270–503; sequence GHDLELDSIV…RLLLRKSMHL (234 aa).

The protein belongs to the AccD/PCCB family. In terms of assembly, the biotin-dependent long-chain acyl-CoA carboxylase (LCC) complex is composed of AccA3, which contains the biotin carboxylase (BC) and biotin carboxyl carrier protein (BCCP) domains, and AccD4, which contains the carboxyl transferase (CT) domain. The complex also contains the beta5 subunit AccD5 and the epsilon subunit AccE5. The four subunits are essential for activity, but AccD5, together with AccE5, probably plays a structural role rather than a catalytic one.

Its function is as follows. Component of a biotin-dependent acyl-CoA carboxylase complex. This subunit transfers the CO2 from carboxybiotin to the CoA ester substrate. When associated with the alpha3 subunit AccA3, the beta5 subunit AccD5 and the epsilon subunit AccE5, forms the LCC complex, which is involved in the carboxylation of long chain acyl-CoA. The LCC complex can use C16-C24 substrates, the highest specific activity is obtained with carboxy-C20-CoA. Has low activity with acetyl-CoA and propionyl-CoA. This is Biotin-dependent long chain acyl-coenzyme A carboxylase beta4 subunit from Mycobacterium tuberculosis (strain ATCC 25618 / H37Rv).